Here is a 550-residue protein sequence, read N- to C-terminus: Glucose-6-phosphate isomerase 3 (550 aa).

Residue E357 is the Proton donor of the active site. Catalysis depends on residues H388 and K514.

This sequence belongs to the GPI family.

Its subcellular location is the cytoplasm. It carries out the reaction alpha-D-glucose 6-phosphate = beta-D-fructose 6-phosphate. It participates in carbohydrate biosynthesis; gluconeogenesis. It functions in the pathway carbohydrate degradation; glycolysis; D-glyceraldehyde 3-phosphate and glycerone phosphate from D-glucose: step 2/4. Catalyzes the reversible isomerization of glucose-6-phosphate to fructose-6-phosphate. In Rhodococcus jostii (strain RHA1), this protein is Glucose-6-phosphate isomerase 3.